The following is a 702-amino-acid chain: Pentatricopeptide repeat-containing protein At4g16390, chloroplastic (702 aa).

A chloroplast-targeting transit peptide spans 1-53 (MSFHHLCSSPSSLLHDPLPLCNLLSVYPKSTPRSFLSSYNPNSSHFHSRNLLQ). PPR repeat units follow at residues 174-208 (EVIL…GIKP), 209-243 (DNAT…GCEP), 244-278 (DNVT…KWRI), 279-313 (DAVT…GVKP), 314-348 (NLVI…GFTP), 349-383 (NWST…GLSL), 384-414 (TVIL…MKNC), 420-454 (DSWT…GFEP), and 455-489 (TLFV…GITP). One can recognise a Smr domain in the interval 603–688 (LHLKSLSLGA…WFLTTSVAAK (86 aa)).

This sequence belongs to the PPR family. P subfamily. In terms of tissue distribution, expressed in leaves and flowers and at lower levels in stems and flower buds.

The protein localises to the plastid. The protein resides in the chloroplast. Its function is as follows. Involved in chloroplast RNA processing. Can bind RNA. Involved in chloroplast development. Involved in chloroplast ribosomal RNA (rRNA) processing and/or translation. Required for FtsH-mediated chloroplast biogenesis. Involved in translation and accumulation of chloroplast ATP synthase subunits. The protein is Pentatricopeptide repeat-containing protein At4g16390, chloroplastic of Arabidopsis thaliana (Mouse-ear cress).